The following is a 181-amino-acid chain: Inner membrane-spanning protein YciB (181 aa).

Transmembrane regions (helical) follow at residues 8 to 28, 53 to 73, 76 to 96, 121 to 141, and 149 to 169; these read FPIICFFVAYKFWGIYIATAA, ITLIFILLLGSFTLVFHNAIF, WKPTIVYWIFAIVLFGSHFFG, LSWALFFLILGVLNLFVVYNF, and FKLFGTLVLMLVFILGQAFYI.

Belongs to the YciB family.

It is found in the cell inner membrane. Plays a role in cell envelope biogenesis, maintenance of cell envelope integrity and membrane homeostasis. The polypeptide is Inner membrane-spanning protein YciB (Coxiella burnetii (strain CbuG_Q212) (Coxiella burnetii (strain Q212))).